We begin with the raw amino-acid sequence, 629 residues long: EF-hand calcium-binding domain-containing protein 7 (629 aa).

The disordered stretch occupies residues 1-25 (MAISPRSDATFSSQKSTPSESPRTK). Over residues 7 to 21 (SDATFSSQKSTPSES) the composition is skewed to polar residues. 2 EF-hand domains span residues 102 to 137 (TSKA…RGEK) and 138 to 173 (MTRE…TNEQ). The tract at residues 195 to 229 (NHIEGSPERDPSPVPKPSPKITRKTDPETFLNKGD) is disordered. Phosphoserine is present on residues S200 and S212. The region spanning 403 to 438 (EFKSTLSDIFEVIDLDGNGLLSLEEYNFFELRTSGE) is the EF-hand 3 domain. D416, D418, N420, and E427 together coordinate Ca(2+).

Component of the EvC complex composed of EFCAB7, IQCE, EVC2 and EVC; built from two subcomplexes, EVC2:EVC and EFCAB7:IQCE. Interacts (via EF-hand 1 and 2) with IQCE (via N-terminus); this interaction anchors the EVC-EVC2 complex in a signaling microdomain at the base of cilia and stimulates the Hedgehog (Hh) pathway. Interacts with EVC2 (via N-terminal end). Interacts with EVC.

The protein localises to the cell projection. It localises to the cilium membrane. In terms of biological role, component of the EvC complex that positively regulates ciliary Hedgehog (Hh) signaling. Required for the localization of the EVC2:EVC subcomplex at the base of primary cilia. In Homo sapiens (Human), this protein is EF-hand calcium-binding domain-containing protein 7 (EFCAB7).